The sequence spans 123 residues: Large ribosomal subunit protein bL12 (123 aa).

It belongs to the bacterial ribosomal protein bL12 family. Homodimer. Part of the ribosomal stalk of the 50S ribosomal subunit. Forms a multimeric L10(L12)X complex, where L10 forms an elongated spine to which 2 to 4 L12 dimers bind in a sequential fashion. Binds GTP-bound translation factors.

Functionally, forms part of the ribosomal stalk which helps the ribosome interact with GTP-bound translation factors. Is thus essential for accurate translation. The protein is Large ribosomal subunit protein bL12 of Borrelia duttonii (strain Ly).